The following is a 373-amino-acid chain: NK1 transcription factor-related protein 1 (373 aa).

Disordered regions lie at residues 49–74 (ALPA…TVHR), 149–231 (SDFT…RRAR), and 281–328 (KWKK…SMHT). Basic and acidic residues predominate over residues 53 to 63 (ESRETSPRHEP). A compositionally biased stretch (polar residues) spans 168-177 (EESSALTGNN). Positions 196–210 (GQQTQQSSSNGQNHQ) are enriched in low complexity. The segment at residues 227 to 286 (PRRARTAFTYEQLVALENKFKSTRYLSVCERLNLALSLSLTETQVKIWFQNRRTKWKKQN) is a DNA-binding region (homeobox). Over residues 296-310 (SGGGGGNGPSNGLGG) the composition is skewed to gly residues.

It belongs to the NK-1 homeobox family.

The protein resides in the nucleus. May participate in the energy homeostasis regulation. This is NK1 transcription factor-related protein 1 from Danio rerio (Zebrafish).